Here is a 177-residue protein sequence, read N- to C-terminus: Large ribosomal subunit protein uL6 (177 aa).

Belongs to the universal ribosomal protein uL6 family. Part of the 50S ribosomal subunit.

This protein binds to the 23S rRNA, and is important in its secondary structure. It is located near the subunit interface in the base of the L7/L12 stalk, and near the tRNA binding site of the peptidyltransferase center. The chain is Large ribosomal subunit protein uL6 from Rhodopseudomonas palustris (strain HaA2).